The following is a 1167-amino-acid chain: MEEAVPAQTVEVIDPEVRAHVYSLLGGFNGEDADKYVLGDDALSCLRDIKRWLKLYDEKFNRMDVARCLGEANLVNGDLIQILSLWWREGQQSKYMTRIALACVELLVPLTWPLEIHGEMTVNHHRHIPYLQQAQVGYKRGILNMASCGILRAVIRIGLPSMAIPPSERTARDEGILKIMLYLLRNIAIITANARLAAEGEEEETSRSATINAFHDQDVFALLLTLCSNVSDDFNMLDIPLLEILFHMVRGIDVEKLFMNDAQRSAKRTDELNDLLRQESSMRREYAKNAPTRHGRFGTMIWVKRDDAKMSTVSGQDVLRDEQTTLYKMDQSKRWNKPRRGRKAQDMSVNNDFNTPVHISPSATTNLRMFVEEFLDSGFNPLFVHVRKAIERESIRVLDINKRHFLYTVSWFLGAERARRARQREKYAQSGKKPDNELEPDSFGLVAGVLNQETFVFLNRSMQNSLDNKEWDDLNAAMRCFTQILLTVQEMSQSPLEEDQEIAENIQNRIFYEETTHDRILAILRGYTDQGFGYLDACTELSHVFLRMLERYSKTNVDMQVRSRRRARKRKREEQLVNKGSDEEQESEDEDYAEAEKMSKERKFDFTRFAAKFSNQKCVDTFVAFTKFYKELNNEQLKRAHRYFYRIAFKQEMTVLLFRVDILNLFYRIIKGPGGMDSSKPIYKEWEELVRQLIRRLIKKLEQRPALITELLFSKINSTAFYLEYGFEKQTVTTSKRAPAELEVDPKAASTPEEKLSIVVAALVKDEQSALVKWISEVLGSAADEREAWELNSHDVDLAGPRDTQNPIITVKSQDNSFKRAMFQNAKLRLLMTLLKFDRLGQENVEGISWIIPSELKSDELRESKAVIDKALLIGNTDERDPNDLLRKKYSHEPRDGFSGQNLDVNFGSDSEGEDVIPDGPLFPANPRSKAHALNELKQKRKKRKDKGEEEPVDEETLEERRQARLENTRWRLAKIKSDLYVHASDEESDAEADQEFFRLEEERRNEQSERIKKALLLGRTEDAGNKARQRKRGKRSNEPNIAGEEETSGKRRRHSGGTNVELEEDDILMDDMEMPSRASSGEYSSNDADAIDKSMAAAEDELYFDDDLAFGRDRDKDETSVDRDGADASSPRKHNDGSESAEEDIPLAPPNRRRLRAGFVVESDSE.

Disordered regions lie at residues Ser-332–Phe-353, Ser-563–Glu-594, Lys-889–Thr-969, Tyr-981–Asp-1093, and Phe-1105–Glu-1167. The segment covering Arg-572 to Asp-582 has biased composition (basic and acidic residues). Composition is skewed to acidic residues over residues Glu-583 to Ala-593 and Glu-949 to Leu-958. 2 stretches are compositionally biased toward basic and acidic residues: residues Glu-959 to Thr-969 and Glu-996 to Lys-1013. Over residues Glu-1062–Glu-1074 the composition is skewed to acidic residues. A compositionally biased stretch (polar residues) spans Arg-1078–Asp-1088. The span at Ala-1110 to Ala-1127 shows a compositional bias: basic and acidic residues.

This sequence belongs to the timeless family.

The protein localises to the nucleus. Its function is as follows. Involved in chromosome segregation during meiosis and DNA damage repair. This is Topoisomerase 1-associated factor 1 (tof1) from Emericella nidulans (strain FGSC A4 / ATCC 38163 / CBS 112.46 / NRRL 194 / M139) (Aspergillus nidulans).